Reading from the N-terminus, the 56-residue chain is Ovomucoid (56 aa).

Residues valine 6–cysteine 56 enclose the Kazal-like domain. Intrachain disulfides connect cysteine 8–cysteine 38, cysteine 16–cysteine 35, and cysteine 24–cysteine 56. N-linked (GlcNAc...) asparagine glycosylation occurs at asparagine 45.

Its subcellular location is the secreted. This is Ovomucoid from Callipepla squamata pallida (Blue scaled quail).